Here is a 174-residue protein sequence, read N- to C-terminus: Large ribosomal subunit protein bL17 (174 aa).

It belongs to the bacterial ribosomal protein bL17 family. As to quaternary structure, part of the 50S ribosomal subunit. Contacts protein L32.

The protein is Large ribosomal subunit protein bL17 of Ruminiclostridium cellulolyticum (strain ATCC 35319 / DSM 5812 / JCM 6584 / H10) (Clostridium cellulolyticum).